Consider the following 353-residue polypeptide: Photosystem II protein D1 (353 aa).

Threonine 2 bears the N-acetylthreonine mark. Threonine 2 bears the Phosphothreonine mark. Transmembrane regions (helical) follow at residues 29–46 (YIGW…TATS), 118–133 (HFLL…EWEL), and 142–156 (WIAV…AATA). Histidine 118 is a binding site for chlorophyll a. Position 126 (tyrosine 126) interacts with pheophytin a. 2 residues coordinate [CaMn4O5] cluster: aspartate 170 and glutamate 189. The helical transmembrane segment at 197–218 (FHMLGVAGVFGGSLFSAMHGSL) threads the bilayer. Chlorophyll a is bound at residue histidine 198. A quinone-binding positions include histidine 215 and 264-265 (SF). Fe cation is bound at residue histidine 215. Histidine 272 is a Fe cation binding site. Residues 274–288 (FLAAWPVVGIWFTAL) form a helical membrane-spanning segment. [CaMn4O5] cluster is bound by residues histidine 332, glutamate 333, aspartate 342, and alanine 344. Positions 345 to 353 (AVEVPSTNG) are excised as a propeptide.

This sequence belongs to the reaction center PufL/M/PsbA/D family. In terms of assembly, PSII is composed of 1 copy each of membrane proteins PsbA, PsbB, PsbC, PsbD, PsbE, PsbF, PsbH, PsbI, PsbJ, PsbK, PsbL, PsbM, PsbT, PsbX, PsbY, PsbZ, Psb30/Ycf12, at least 3 peripheral proteins of the oxygen-evolving complex and a large number of cofactors. It forms dimeric complexes. Requires The D1/D2 heterodimer binds P680, chlorophylls that are the primary electron donor of PSII, and subsequent electron acceptors. It shares a non-heme iron and each subunit binds pheophytin, quinone, additional chlorophylls, carotenoids and lipids. D1 provides most of the ligands for the Mn4-Ca-O5 cluster of the oxygen-evolving complex (OEC). There is also a Cl(-1) ion associated with D1 and D2, which is required for oxygen evolution. The PSII complex binds additional chlorophylls, carotenoids and specific lipids. as cofactor. Tyr-161 forms a radical intermediate that is referred to as redox-active TyrZ, YZ or Y-Z. In terms of processing, C-terminally processed by CTPA; processing is essential to allow assembly of the oxygen-evolving complex and thus photosynthetic growth.

The protein resides in the plastid. Its subcellular location is the chloroplast thylakoid membrane. It carries out the reaction 2 a plastoquinone + 4 hnu + 2 H2O = 2 a plastoquinol + O2. Functionally, photosystem II (PSII) is a light-driven water:plastoquinone oxidoreductase that uses light energy to abstract electrons from H(2)O, generating O(2) and a proton gradient subsequently used for ATP formation. It consists of a core antenna complex that captures photons, and an electron transfer chain that converts photonic excitation into a charge separation. The D1/D2 (PsbA/PsbD) reaction center heterodimer binds P680, the primary electron donor of PSII as well as several subsequent electron acceptors. This Calycanthus floridus var. glaucus (Eastern sweetshrub) protein is Photosystem II protein D1.